A 221-amino-acid polypeptide reads, in one-letter code: Large ribosomal subunit protein uL3 (221 aa).

The protein belongs to the universal ribosomal protein uL3 family. Part of the 50S ribosomal subunit. Forms a cluster with proteins L14 and L19.

Its function is as follows. One of the primary rRNA binding proteins, it binds directly near the 3'-end of the 23S rRNA, where it nucleates assembly of the 50S subunit. This chain is Large ribosomal subunit protein uL3, found in Nocardia farcinica (strain IFM 10152).